We begin with the raw amino-acid sequence, 362 residues long: UDP-N-acetylglucosamine--N-acetylmuramyl-(pentapeptide) pyrophosphoryl-undecaprenol N-acetylglucosamine transferase (362 aa).

Residues 14–16 (TGG), Arg170, Ser199, and Gln289 contribute to the UDP-N-acetyl-alpha-D-glucosamine site.

It belongs to the glycosyltransferase 28 family. MurG subfamily.

The protein resides in the cell inner membrane. It catalyses the reaction di-trans,octa-cis-undecaprenyl diphospho-N-acetyl-alpha-D-muramoyl-L-alanyl-D-glutamyl-meso-2,6-diaminopimeloyl-D-alanyl-D-alanine + UDP-N-acetyl-alpha-D-glucosamine = di-trans,octa-cis-undecaprenyl diphospho-[N-acetyl-alpha-D-glucosaminyl-(1-&gt;4)]-N-acetyl-alpha-D-muramoyl-L-alanyl-D-glutamyl-meso-2,6-diaminopimeloyl-D-alanyl-D-alanine + UDP + H(+). Its pathway is cell wall biogenesis; peptidoglycan biosynthesis. Functionally, cell wall formation. Catalyzes the transfer of a GlcNAc subunit on undecaprenyl-pyrophosphoryl-MurNAc-pentapeptide (lipid intermediate I) to form undecaprenyl-pyrophosphoryl-MurNAc-(pentapeptide)GlcNAc (lipid intermediate II). The chain is UDP-N-acetylglucosamine--N-acetylmuramyl-(pentapeptide) pyrophosphoryl-undecaprenol N-acetylglucosamine transferase from Borrelia turicatae (strain 91E135).